The chain runs to 441 residues: Arginine biosynthesis bifunctional protein ArgJ, mitochondrial (441 aa).

Residues Thr-177, Lys-204, Thr-215, Glu-301, Asn-436, and Ser-441 each contribute to the substrate site. Thr-215 (nucleophile) is an active-site residue.

It belongs to the ArgJ family. In terms of assembly, heterodimer of an alpha and a beta chain. Post-translationally, the alpha and beta chains are autoproteolytically processed from a single precursor protein within the mitochondrion.

The protein localises to the mitochondrion matrix. It catalyses the reaction N(2)-acetyl-L-ornithine + L-glutamate = N-acetyl-L-glutamate + L-ornithine. It carries out the reaction L-glutamate + acetyl-CoA = N-acetyl-L-glutamate + CoA + H(+). It participates in amino-acid biosynthesis; L-arginine biosynthesis; L-ornithine and N-acetyl-L-glutamate from L-glutamate and N(2)-acetyl-L-ornithine (cyclic): step 1/1. It functions in the pathway amino-acid biosynthesis; L-arginine biosynthesis; N(2)-acetyl-L-ornithine from L-glutamate: step 1/4. Its function is as follows. Catalyzes two activities which are involved in the cyclic version of arginine biosynthesis: the synthesis of acetylglutamate from glutamate and acetyl-CoA, and of ornithine by transacetylation between acetylornithine and glutamate. The polypeptide is Arginine biosynthesis bifunctional protein ArgJ, mitochondrial (Candida glabrata (strain ATCC 2001 / BCRC 20586 / JCM 3761 / NBRC 0622 / NRRL Y-65 / CBS 138) (Yeast)).